The following is a 166-amino-acid chain: 16S rRNA aminocarboxypropyltransferase (166 aa).

Residues Thr-17, Ile-62, Leu-84, Tyr-99, and Ser-103 each coordinate S-adenosyl-L-methionine.

Belongs to the TDD superfamily. TSR3 family.

The protein resides in the cytoplasm. The enzyme catalyses an N(1)-methylpseudouridine in rRNA + S-adenosyl-L-methionine = N(1)-methyl-N(3)-[(3S)-3-amino-3-carboxypropyl]pseudouridine in rRNA + S-methyl-5'-thioadenosine + H(+). Aminocarboxypropyltransferase that catalyzes the aminocarboxypropyl transfer on pseudouridine corresponding to position 914 in M.jannaschii 16S rRNA. It constitutes the last step in biosynthesis of the hypermodified N1-methyl-N3-(3-amino-3-carboxypropyl) pseudouridine (m1acp3-Psi). This is 16S rRNA aminocarboxypropyltransferase from Saccharolobus islandicus (strain Y.N.15.51 / Yellowstone #2) (Sulfolobus islandicus).